The chain runs to 338 residues: tRNA N6-adenosine threonylcarbamoyltransferase (338 aa).

Fe cation contacts are provided by His-110 and His-114. Residues 132–136 (LLSGG), Asp-165, Gly-178, and Asn-274 contribute to the substrate site. Asp-298 provides a ligand contact to Fe cation.

This sequence belongs to the KAE1 / TsaD family. The cofactor is Fe(2+).

Its subcellular location is the cytoplasm. It catalyses the reaction L-threonylcarbamoyladenylate + adenosine(37) in tRNA = N(6)-L-threonylcarbamoyladenosine(37) in tRNA + AMP + H(+). Its function is as follows. Required for the formation of a threonylcarbamoyl group on adenosine at position 37 (t(6)A37) in tRNAs that read codons beginning with adenine. Is involved in the transfer of the threonylcarbamoyl moiety of threonylcarbamoyl-AMP (TC-AMP) to the N6 group of A37, together with TsaE and TsaB. TsaD likely plays a direct catalytic role in this reaction. The polypeptide is tRNA N6-adenosine threonylcarbamoyltransferase (Borrelia garinii subsp. bavariensis (strain ATCC BAA-2496 / DSM 23469 / PBi) (Borreliella bavariensis)).